The following is a 405-amino-acid chain: MKSSKNDTFVYRTWVKTLVVYFVMFVMSAVVPITAMFPNLGYPCYFNALVDYGALNLTNYNLAHHLTPTLYLEPPEMFVYITLVFIADCVAFIYYACGEVALIKARKKVSGLTDLSAWVSAVGSPTVLFLAILKLWSIQVFIQVLSYKHVFLSAFVYFLHFLASVLHACACVTRFSPVWVVKAQDNSIPQDTFLWWVVFYLKPVVTNLYLGCLALETLVFSLSVFLALGNSFYFMVGDMVLGAVNLFLILPIFWYILTEVWLASFLRHNFGFYCGMFIASIILILPLVRYEAVFVSAKLHTTVAINVAIIPILCSVAMLIRICRIFKSMRQGTDYVPVSETVELELESEPRPRPSRTPSPGRNRRRSSTSSSSSRSTRRQRPVSTQALVSSVLPMTTDSEEEIFP.

Residues 1–17 (MKSSKNDTFVYRTWVKT) are Intravirion-facing. Residues 18 to 38 (LVVYFVMFVMSAVVPITAMFP) form a helical membrane-spanning segment. The Virion surface segment spans residues 39–76 (NLGYPCYFNALVDYGALNLTNYNLAHHLTPTLYLEPPE). A helical transmembrane segment spans residues 77–97 (MFVYITLVFIADCVAFIYYAC). At 98-121 (GEVALIKARKKVSGLTDLSAWVSA) the chain is on the intravirion side. A helical membrane pass occupies residues 122 to 142 (VGSPTVLFLAILKLWSIQVFI). Residues 143 to 149 (QVLSYKH) are Virion surface-facing. The chain crosses the membrane as a helical span at residues 150–170 (VFLSAFVYFLHFLASVLHACA). At 171–192 (CVTRFSPVWVVKAQDNSIPQDT) the chain is on the intravirion side. Residues 193-215 (FLWWVVFYLKPVVTNLYLGCLAL) form a helical membrane-spanning segment. Residues 216-245 (ETLVFSLSVFLALGNSFYFMVGDMVLGAVN) lie on the Virion surface side of the membrane. Residues 246–266 (LFLILPIFWYILTEVWLASFL) traverse the membrane as a helical segment. R267 is a topological domain (intravirion). Residues 268-288 (HNFGFYCGMFIASIILILPLV) form a helical membrane-spanning segment. Topologically, residues 289–299 (RYEAVFVSAKL) are virion surface. Residues 300–320 (HTTVAINVAIIPILCSVAMLI) form a helical membrane-spanning segment. At 321-405 (RICRIFKSMR…TTDSEEEIFP (85 aa)) the chain is on the intravirion side. The tract at residues 346-405 (LESEPRPRPSRTPSPGRNRRRSSTSSSSSRSTRRQRPVSTQALVSSVLPMTTDSEEEIFP) is disordered. Residues 386–397 (QALVSSVLPMTT) are compositionally biased toward polar residues.

The protein belongs to the herpesviridae glycoprotein M family. Interacts (via N-terminus) with gN (via N-terminus). The gM-gN heterodimer forms the gCII complex.

It is found in the virion membrane. The protein localises to the host Golgi apparatus. The protein resides in the host trans-Golgi network. It localises to the host endosome membrane. Its subcellular location is the host nucleus inner membrane. Envelope glycoprotein important for virion assembly and egress. Plays a role in the correct incorporation of gH-gL into virion membrane. Directs the glycoprotein N (gN) to the host trans-Golgi network. This Epstein-Barr virus (strain B95-8) (HHV-4) protein is Envelope glycoprotein M.